Consider the following 417-residue polypeptide: Methylthioribose-1-phosphate isomerase (417 aa).

Asp285 (proton donor) is an active-site residue.

It belongs to the eIF-2B alpha/beta/delta subunits family. MtnA subfamily.

It localises to the cytoplasm. The protein resides in the nucleus. The enzyme catalyses 5-(methylsulfanyl)-alpha-D-ribose 1-phosphate = 5-(methylsulfanyl)-D-ribulose 1-phosphate. It participates in amino-acid biosynthesis; L-methionine biosynthesis via salvage pathway; L-methionine from S-methyl-5-thio-alpha-D-ribose 1-phosphate: step 1/6. In terms of biological role, catalyzes the interconversion of methylthioribose-1-phosphate (MTR-1-P) into methylthioribulose-1-phosphate (MTRu-1-P). The polypeptide is Methylthioribose-1-phosphate isomerase (Lachancea thermotolerans (strain ATCC 56472 / CBS 6340 / NRRL Y-8284) (Yeast)).